Consider the following 568-residue polypeptide: Sulfate adenylyltransferase (568 aa).

The tract at residues 1–162 (MANSPHGGVL…IEAVNKLNHY (162 aa)) is N-terminal. The interval 163–388 (DYVALRYSPA…LRESSPPRAT (226 aa)) is catalytic. Residue Q190 coordinates sulfate. Residues 190–193 (QTRN) and 284–287 (GRDH) contribute to the ATP site. Active-site residues include T191, R192, and N193. R192 lines the sulfate pocket. A288 contributes to the sulfate binding site. Position 326 (V326) interacts with ATP. Residues 389–568 (QGFTIFLTGY…LESEGYFDRL (180 aa)) are allosteric regulation domain; adenylyl-sulfate kinase-like. 3'-phosphoadenylyl sulfate contacts are provided by residues 428-431 (DTVR), R445, 471-472 (IA), and R510.

This sequence in the N-terminal section; belongs to the sulfate adenylyltransferase family. It in the C-terminal section; belongs to the APS kinase family. Homohexamer. Dimer of trimers.

It localises to the cytoplasm. The catalysed reaction is sulfate + ATP + H(+) = adenosine 5'-phosphosulfate + diphosphate. It participates in sulfur metabolism; hydrogen sulfide biosynthesis; sulfite from sulfate: step 1/3. With respect to regulation, allosterically inhibited by 3'-phosphoadenosine 5'-phosphosulfate (PAPS). Functionally, catalyzes the first intracellular reaction of sulfate assimilation, forming adenosine-5'-phosphosulfate (APS) from inorganic sulfate and ATP. Plays an important role in sulfate activation as a component of the biosynthesis pathway of sulfur-containing amino acids. The chain is Sulfate adenylyltransferase from Aspergillus terreus.